We begin with the raw amino-acid sequence, 726 residues long: NHL repeat-containing protein 2 (726 aa).

6 NHL repeats span residues 212–254 (KLYK…VWKN), 265–307 (NPGR…IDLE), 335–369 (ISSPWDVVFGRSGPEVQRDNILWIAMAGTHQIWAL), 409–439 (FAQPSGLSLASEGPWSCLFVADSESSTVRTV), 461–505 (AFGD…VDPK), and 518–562 (ASNM…LDLE).

Monomer.

It is found in the cytoplasm. The protein localises to the cytosol. Required for normal embryonic development. This is NHL repeat-containing protein 2 (NHLRC2) from Bos taurus (Bovine).